Here is a 203-residue protein sequence, read N- to C-terminus: Leucyl/phenylalanyl-tRNA--protein transferase (203 aa).

Belongs to the L/F-transferase family.

The protein resides in the cytoplasm. It carries out the reaction N-terminal L-lysyl-[protein] + L-leucyl-tRNA(Leu) = N-terminal L-leucyl-L-lysyl-[protein] + tRNA(Leu) + H(+). The catalysed reaction is N-terminal L-arginyl-[protein] + L-leucyl-tRNA(Leu) = N-terminal L-leucyl-L-arginyl-[protein] + tRNA(Leu) + H(+). It catalyses the reaction L-phenylalanyl-tRNA(Phe) + an N-terminal L-alpha-aminoacyl-[protein] = an N-terminal L-phenylalanyl-L-alpha-aminoacyl-[protein] + tRNA(Phe). Its function is as follows. Functions in the N-end rule pathway of protein degradation where it conjugates Leu, Phe and, less efficiently, Met from aminoacyl-tRNAs to the N-termini of proteins containing an N-terminal arginine or lysine. The protein is Leucyl/phenylalanyl-tRNA--protein transferase of Chelativorans sp. (strain BNC1).